A 235-amino-acid polypeptide reads, in one-letter code: Ubiquinone/menaquinone biosynthesis C-methyltransferase UbiE (235 aa).

S-adenosyl-L-methionine-binding residues include Thr59, Asp84, and Ser123.

This sequence belongs to the class I-like SAM-binding methyltransferase superfamily. MenG/UbiE family.

The catalysed reaction is a 2-demethylmenaquinol + S-adenosyl-L-methionine = a menaquinol + S-adenosyl-L-homocysteine + H(+). It catalyses the reaction a 2-methoxy-6-(all-trans-polyprenyl)benzene-1,4-diol + S-adenosyl-L-methionine = a 5-methoxy-2-methyl-3-(all-trans-polyprenyl)benzene-1,4-diol + S-adenosyl-L-homocysteine + H(+). Its pathway is quinol/quinone metabolism; menaquinone biosynthesis; menaquinol from 1,4-dihydroxy-2-naphthoate: step 2/2. It participates in cofactor biosynthesis; ubiquinone biosynthesis. Functionally, methyltransferase required for the conversion of demethylmenaquinol (DMKH2) to menaquinol (MKH2) and the conversion of 2-polyprenyl-6-methoxy-1,4-benzoquinol (DDMQH2) to 2-polyprenyl-3-methyl-6-methoxy-1,4-benzoquinol (DMQH2). In Campylobacter jejuni subsp. jejuni serotype O:6 (strain 81116 / NCTC 11828), this protein is Ubiquinone/menaquinone biosynthesis C-methyltransferase UbiE.